Consider the following 382-residue polypeptide: Non-structural maintenance of chromosomes element 4 homolog A (382 aa).

Residues 1–21 are compositionally biased toward basic and acidic residues; the sequence is MSGDSSGRRPEGRGRGRDPHR. The interval 1–80 is disordered; sequence MSGDSSGRRP…ASLEEETDPS (80 aa). Over residues 31-41 the composition is skewed to low complexity; sequence RSPLSPGSRRG. A compositionally biased stretch (basic and acidic residues) spans 42–55; sequence AAPERREAPERPGL. The span at 56–78 shows a compositional bias: acidic residues; that stretch reads EDTEPSDSGDEMIDPASLEEETD. The residue at position 342 (Thr-342) is a Phosphothreonine. At Ser-374 the chain carries Phosphoserine.

It belongs to the NSE4 family. Component of the SMC5-SMC6 complex which consists at least of SMC5, SMC6, NSMCE2, NSMCE1, NSMCE4A or EID3 and NSMCE3. NSMCE1, NSMCE4A or EID3 and NSMCE3 probably form a subcomplex that bridges the head domains of the SMC5:SMC6 heterodimer. Interacts with NSMCE3.

The protein localises to the nucleus. Its subcellular location is the chromosome. It localises to the telomere. Functionally, component of the SMC5-SMC6 complex, a complex involved in repair of DNA double-strand breaks by homologous recombination. The complex may promote sister chromatid homologous recombination by recruiting the SMC1-SMC3 cohesin complex to double-strand breaks. The complex is required for telomere maintenance via recombination and mediates sumoylation of shelterin complex (telosome) components. The protein is Non-structural maintenance of chromosomes element 4 homolog A (NSMCE4A) of Bos taurus (Bovine).